We begin with the raw amino-acid sequence, 302 residues long: Lysosomal thioesterase PPT2 (302 aa).

A signal peptide spans 1-27; that stretch reads MLGLCGQRLPAAWVLLLLPFLPLLLLA. Asn60 carries N-linked (GlcNAc...) asparagine glycosylation. Intrachain disulfides connect Cys109-Cys117 and Cys165-Cys176. Ser111 acts as the Nucleophile in catalysis. 2 N-linked (GlcNAc...) asparagine glycosylation sites follow: Asn190 and Asn206. The active site involves Asp228. Residue Asn245 is glycosylated (N-linked (GlcNAc...) asparagine). Cys276 and Cys296 are oxidised to a cystine. Residue His283 is part of the active site. An N-linked (GlcNAc...) asparagine glycan is attached at Asn289.

This sequence belongs to the palmitoyl-protein thioesterase family. In terms of tissue distribution, broadly expressed, with highest levels in skeletal muscle.

It is found in the lysosome. The catalysed reaction is hexadecanoyl-CoA + H2O = hexadecanoate + CoA + H(+). It catalyses the reaction S-hexadecanoyl-N-acetylcysteamine + H2O = N-acetylcysteamine + hexadecanoate + H(+). Functionally, catalyzes the cleavage of thioester bonds from S-palmitoyl-CoA or S-palmitoyl-N-acetylcysteamine (unbranched structures) but does not have activity against palmitoylcysteine or palmitoylated proteins, branched structures or bulky head groups. Conversely, hydrolyzes both long and short chain fatty acyl-CoA substrate. In terms of biological role, catalytically inactive due to lack of active site His-283. In Homo sapiens (Human), this protein is Lysosomal thioesterase PPT2.